Reading from the N-terminus, the 207-residue chain is Putative 3-methyladenine DNA glycosylase (207 aa).

Belongs to the DNA glycosylase MPG family.

This Burkholderia lata (strain ATCC 17760 / DSM 23089 / LMG 22485 / NCIMB 9086 / R18194 / 383) protein is Putative 3-methyladenine DNA glycosylase.